A 584-amino-acid polypeptide reads, in one-letter code: Chaperonin GroEL 1 (584 aa).

Residues 29–32 (TIGP), 86–90 (DGTTT), glycine 413, and aspartate 492 each bind ATP. Residues 523–542 (EPEAAAPGGPGGDPMGGMGG) are disordered. Positions 530-542 (GGPGGDPMGGMGG) are enriched in gly residues.

The protein belongs to the chaperonin (HSP60) family. In terms of assembly, forms a cylinder of 14 subunits composed of two heptameric rings stacked back-to-back. Interacts with the co-chaperonin GroES.

It localises to the cytoplasm. The enzyme catalyses ATP + H2O + a folded polypeptide = ADP + phosphate + an unfolded polypeptide.. Functionally, together with its co-chaperonin GroES, plays an essential role in assisting protein folding. The GroEL-GroES system forms a nano-cage that allows encapsulation of the non-native substrate proteins and provides a physical environment optimized to promote and accelerate protein folding. The polypeptide is Chaperonin GroEL 1 (Prochlorococcus marinus (strain MIT 9312)).